The primary structure comprises 369 residues: MELSYYEILEVEKHSNQETIKKSYRKLALKYHPDRNAGDKEAEEKFKLINEAYGVLSDEKKRALYDRYGKKGLNQAGASQGDFSDFFEDLGSFFEDAFGFGARGSKRQKSSIAPDYLQTLELSFKEAVFGCKKTIKVQYQSVCESCDGTGAKDKALETCKQCNGQGQVFMRQGFMSFAQTCGACQGKGKIVKTPCQACKGKTYILKDEEIDAIIPEGIDDQNRMVLKNKGNEYEKGKRGDLYLEAQVKEDEHFKREGCDLFIKAPVFFTTIALGHTIKVPSLKGDELELKIPRNARDKQTFAFRNEGVKHPESSYRGSLIVELQVIYPKSLNKEQQELLEKLHASFGYEGEPHKSVLETCISKIKDWFK.

The 66-residue stretch at 4-69 (SYYEILEVEK…KKRALYDRYG (66 aa)) folds into the J domain. The CR-type zinc finger occupies 130–207 (GCKKTIKVQY…CKGKTYILKD (78 aa)). Cys-143, Cys-146, Cys-159, Cys-162, Cys-181, Cys-184, Cys-195, and Cys-198 together coordinate Zn(2+). 4 CXXCXGXG motif repeats span residues 143–150 (CESCDGTG), 159–166 (CKQCNGQG), 181–188 (CGACQGKG), and 195–202 (CQACKGKT).

This sequence belongs to the DnaJ family. As to quaternary structure, homodimer. Zn(2+) is required as a cofactor.

It localises to the cytoplasm. In terms of biological role, participates actively in the response to hyperosmotic and heat shock by preventing the aggregation of stress-denatured proteins and by disaggregating proteins, also in an autonomous, DnaK-independent fashion. Unfolded proteins bind initially to DnaJ; upon interaction with the DnaJ-bound protein, DnaK hydrolyzes its bound ATP, resulting in the formation of a stable complex. GrpE releases ADP from DnaK; ATP binding to DnaK triggers the release of the substrate protein, thus completing the reaction cycle. Several rounds of ATP-dependent interactions between DnaJ, DnaK and GrpE are required for fully efficient folding. Also involved, together with DnaK and GrpE, in the DNA replication of plasmids through activation of initiation proteins. In Helicobacter pylori (strain ATCC 700392 / 26695) (Campylobacter pylori), this protein is Chaperone protein DnaJ.